Consider the following 217-residue polypeptide: GrpE protein homolog 1, mitochondrial (217 aa).

The transit peptide at 1 to 27 (MAAQCVRLARRSLPALALSLRPSPRLL) directs the protein to the mitochondrion. The tract at residues 29–56 (TATKQKNSGQNLEEDMGQSEQKADPPAT) is disordered. The segment covering 30 to 39 (ATKQKNSGQN) has biased composition (polar residues). Residue Lys94 is modified to N6-acetyllysine; alternate. Lys94 is subject to N6-succinyllysine; alternate. At Lys100 the chain carries N6-acetyllysine. Lys120 bears the N6-succinyllysine mark. An N6-acetyllysine; alternate modification is found at Lys215. Residue Lys215 is modified to N6-succinyllysine; alternate.

The protein belongs to the GrpE family. In terms of assembly, probable component of the PAM complex at least composed of a mitochondrial HSP70 protein, GRPEL1 or GRPEL2, TIMM44, TIMM16/PAM16 and TIMM14/DNAJC19. Binds to HSP70, HSC70 and HSJ1B.

It localises to the mitochondrion matrix. Functionally, essential component of the PAM complex, a complex required for the translocation of transit peptide-containing proteins from the inner membrane into the mitochondrial matrix in an ATP-dependent manner. Seems to control the nucleotide-dependent binding of mitochondrial HSP70 to substrate proteins. This is GrpE protein homolog 1, mitochondrial (GRPEL1) from Homo sapiens (Human).